The following is a 281-amino-acid chain: Phosphatidylglycerol--prolipoprotein diacylglyceryl transferase (281 aa).

7 helical membrane-spanning segments follow: residues 11–31 (IIFT…VISF), 57–77 (LLYS…IIFY), 89–109 (VFYI…AIIV), 121–141 (ILEI…AGRI), 194–214 (PTQL…IYFF), 222–242 (GSIS…IEFF), and 255–275 (IITM…IIMY). Position 140 (arginine 140) interacts with a 1,2-diacyl-sn-glycero-3-phospho-(1'-sn-glycerol).

The protein belongs to the Lgt family.

Its subcellular location is the cell inner membrane. The enzyme catalyses L-cysteinyl-[prolipoprotein] + a 1,2-diacyl-sn-glycero-3-phospho-(1'-sn-glycerol) = an S-1,2-diacyl-sn-glyceryl-L-cysteinyl-[prolipoprotein] + sn-glycerol 1-phosphate + H(+). The protein operates within protein modification; lipoprotein biosynthesis (diacylglyceryl transfer). In terms of biological role, catalyzes the transfer of the diacylglyceryl group from phosphatidylglycerol to the sulfhydryl group of the N-terminal cysteine of a prolipoprotein, the first step in the formation of mature lipoproteins. The sequence is that of Phosphatidylglycerol--prolipoprotein diacylglyceryl transferase from Buchnera aphidicola subsp. Acyrthosiphon pisum (strain 5A).